The primary structure comprises 420 residues: UDP-N-acetylglucosamine 1-carboxyvinyltransferase (420 aa).

22–23 contributes to the phosphoenolpyruvate binding site; it reads KN. Arg91 contacts UDP-N-acetyl-alpha-D-glucosamine. Cys115 acts as the Proton donor in catalysis. Cys115 is subject to 2-(S-cysteinyl)pyruvic acid O-phosphothioketal. Residues 120–124, 160–163, Asp305, and Ile327 contribute to the UDP-N-acetyl-alpha-D-glucosamine site; these read RPVDL and KVSV.

This sequence belongs to the EPSP synthase family. MurA subfamily.

Its subcellular location is the cytoplasm. It catalyses the reaction phosphoenolpyruvate + UDP-N-acetyl-alpha-D-glucosamine = UDP-N-acetyl-3-O-(1-carboxyvinyl)-alpha-D-glucosamine + phosphate. Its pathway is cell wall biogenesis; peptidoglycan biosynthesis. In terms of biological role, cell wall formation. Adds enolpyruvyl to UDP-N-acetylglucosamine. The chain is UDP-N-acetylglucosamine 1-carboxyvinyltransferase from Proteus mirabilis (strain HI4320).